Here is a 546-residue protein sequence, read N- to C-terminus: Probable protein kinase UbiB (546 aa).

A Protein kinase domain is found at 123 to 501 (DFQEIPLASA…RTNHGQALFL (379 aa)). Residues 129-137 (LASASISQV) and Lys-152 contribute to the ATP site. Asp-287 acts as the Proton acceptor in catalysis. A run of 2 helical transmembrane segments spans residues 497 to 517 (QALFLFGVGATLVTSSIFLYI) and 521 to 541 (YLKIFSIFLFVIGIFIWTIGW).

The protein belongs to the ABC1 family. UbiB subfamily.

It is found in the cell inner membrane. The protein operates within cofactor biosynthesis; ubiquinone biosynthesis [regulation]. In terms of biological role, is probably a protein kinase regulator of UbiI activity which is involved in aerobic coenzyme Q (ubiquinone) biosynthesis. In Blochmanniella pennsylvanica (strain BPEN), this protein is Probable protein kinase UbiB.